Here is a 338-residue protein sequence, read N- to C-terminus: Ketol-acid reductoisomerase (NADP(+)) (338 aa).

The KARI N-terminal Rossmann domain maps to Met1–Thr181. NADP(+) is bound by residues Tyr24 to Gln27, Arg47, Ser50, Ser52, and Asp82 to Gln85. His107 is a catalytic residue. Gly133 serves as a coordination point for NADP(+). The KARI C-terminal knotted domain occupies Thr182–Ile327. Positions 190, 194, 226, and 230 each coordinate Mg(2+). Ser251 contacts substrate.

Belongs to the ketol-acid reductoisomerase family. Requires Mg(2+) as cofactor.

The enzyme catalyses (2R)-2,3-dihydroxy-3-methylbutanoate + NADP(+) = (2S)-2-acetolactate + NADPH + H(+). It carries out the reaction (2R,3R)-2,3-dihydroxy-3-methylpentanoate + NADP(+) = (S)-2-ethyl-2-hydroxy-3-oxobutanoate + NADPH + H(+). The protein operates within amino-acid biosynthesis; L-isoleucine biosynthesis; L-isoleucine from 2-oxobutanoate: step 2/4. It functions in the pathway amino-acid biosynthesis; L-valine biosynthesis; L-valine from pyruvate: step 2/4. Involved in the biosynthesis of branched-chain amino acids (BCAA). Catalyzes an alkyl-migration followed by a ketol-acid reduction of (S)-2-acetolactate (S2AL) to yield (R)-2,3-dihydroxy-isovalerate. In the isomerase reaction, S2AL is rearranged via a Mg-dependent methyl migration to produce 3-hydroxy-3-methyl-2-ketobutyrate (HMKB). In the reductase reaction, this 2-ketoacid undergoes a metal-dependent reduction by NADPH to yield (R)-2,3-dihydroxy-isovalerate. This Chromohalobacter salexigens (strain ATCC BAA-138 / DSM 3043 / CIP 106854 / NCIMB 13768 / 1H11) protein is Ketol-acid reductoisomerase (NADP(+)).